The sequence spans 150 residues: UPF0178 protein Shew_2726 (150 aa).

Belongs to the UPF0178 family.

This chain is UPF0178 protein Shew_2726, found in Shewanella loihica (strain ATCC BAA-1088 / PV-4).